Reading from the N-terminus, the 35-residue chain is Putative neurotoxin (35 aa).

Residues 1–35 (KEGYPKNSEGCKITCLFNDPYCKGLCINLSTQADY) form the LCN-type CS-alpha/beta domain.

As to expression, expressed by the venom gland.

It localises to the secreted. Functionally, causes paralysis and death in insects (A.domestica). This Rhopalurus junceus (Caribbean blue scorpion) protein is Putative neurotoxin.